The chain runs to 562 residues: Gut esterase 1 (562 aa).

Positions 1–16 are cleaved as a signal peptide; that stretch reads MRIFLVSVILINACWA. N-linked (GlcNAc...) asparagine; atypical glycosylation is present at N73. Cysteines 75 and 93 form a disulfide. S198 functions as the Acyl-ester intermediate in the catalytic mechanism. Residues C250 and C258 are joined by a disulfide bond. Catalysis depends on charge relay system residues E319 and H452. Residues 559 to 562 carry the Prevents secretion from ER motif; sequence KDEL.

It belongs to the type-B carboxylesterase/lipase family. In terms of tissue distribution, expressed only in the intestine.

It is found in the endoplasmic reticulum lumen. It catalyses the reaction a carboxylic ester + H2O = an alcohol + a carboxylate + H(+). The polypeptide is Gut esterase 1 (ges-1) (Caenorhabditis elegans).